A 156-amino-acid polypeptide reads, in one-letter code: Ribosomal RNA large subunit methyltransferase H (156 aa).

Residues leucine 73, glycine 104, and 123–128 (LSALTL) each bind S-adenosyl-L-methionine.

This sequence belongs to the RNA methyltransferase RlmH family. As to quaternary structure, homodimer.

The protein localises to the cytoplasm. It carries out the reaction pseudouridine(1915) in 23S rRNA + S-adenosyl-L-methionine = N(3)-methylpseudouridine(1915) in 23S rRNA + S-adenosyl-L-homocysteine + H(+). In terms of biological role, specifically methylates the pseudouridine at position 1915 (m3Psi1915) in 23S rRNA. The sequence is that of Ribosomal RNA large subunit methyltransferase H from Shewanella putrefaciens (strain CN-32 / ATCC BAA-453).